The sequence spans 318 residues: Transaldolase (318 aa).

Lysine 131 functions as the Schiff-base intermediate with substrate in the catalytic mechanism.

This sequence belongs to the transaldolase family. Type 1 subfamily. Homodimer.

Its subcellular location is the cytoplasm. It carries out the reaction D-sedoheptulose 7-phosphate + D-glyceraldehyde 3-phosphate = D-erythrose 4-phosphate + beta-D-fructose 6-phosphate. It participates in carbohydrate degradation; pentose phosphate pathway; D-glyceraldehyde 3-phosphate and beta-D-fructose 6-phosphate from D-ribose 5-phosphate and D-xylulose 5-phosphate (non-oxidative stage): step 2/3. In terms of biological role, transaldolase is important for the balance of metabolites in the pentose-phosphate pathway. This is Transaldolase from Cellvibrio japonicus (strain Ueda107) (Pseudomonas fluorescens subsp. cellulosa).